Consider the following 149-residue polypeptide: Transcriptional repressor NrdR (149 aa).

Residues 3-34 (CPFCATDDTKVVDSRLTADGYQIRRRRECPVC) fold into a zinc finger. One can recognise an ATP-cone domain in the interval 49–139 (PHIVKNNGSR…VYLSFDDVEE (91 aa)).

Belongs to the NrdR family. Zn(2+) serves as cofactor.

Functionally, negatively regulates transcription of bacterial ribonucleotide reductase nrd genes and operons by binding to NrdR-boxes. The polypeptide is Transcriptional repressor NrdR (Glaesserella parasuis serovar 5 (strain SH0165) (Haemophilus parasuis)).